Here is a 179-residue protein sequence, read N- to C-terminus: Large ribosomal subunit protein uL5 (179 aa).

The protein belongs to the universal ribosomal protein uL5 family. Part of the 50S ribosomal subunit; part of the 5S rRNA/L5/L18/L25 subcomplex. Contacts the 5S rRNA and the P site tRNA. Forms a bridge to the 30S subunit in the 70S ribosome.

In terms of biological role, this is one of the proteins that bind and probably mediate the attachment of the 5S RNA into the large ribosomal subunit, where it forms part of the central protuberance. In the 70S ribosome it contacts protein S13 of the 30S subunit (bridge B1b), connecting the 2 subunits; this bridge is implicated in subunit movement. Contacts the P site tRNA; the 5S rRNA and some of its associated proteins might help stabilize positioning of ribosome-bound tRNAs. This is Large ribosomal subunit protein uL5 from Ectopseudomonas mendocina (strain ymp) (Pseudomonas mendocina).